Consider the following 84-residue polypeptide: UPF0386 protein NGR_c10980 (84 aa).

It belongs to the UPF0386 family.

The protein is UPF0386 protein NGR_c10980 of Sinorhizobium fredii (strain NBRC 101917 / NGR234).